We begin with the raw amino-acid sequence, 328 residues long: Cytochrome c biogenesis protein CcsA (328 aa).

The next 8 membrane-spanning stretches (helical) occupy residues 13–33 (ISFS…LVNL), 46–66 (GIVI…IYSG), 73–93 (LYES…ISYF), 101–121 (LNAI…SGLL), 146–166 (MILG…LLVI), 234–254 (IISL…VWAN), 263–283 (WDPK…FLHI), and 295–315 (AIVA…VNLL).

The protein belongs to the CcmF/CycK/Ccl1/NrfE/CcsA family. As to quaternary structure, may interact with Ccs1.

The protein resides in the plastid. The protein localises to the chloroplast thylakoid membrane. In terms of biological role, required during biogenesis of c-type cytochromes (cytochrome c6 and cytochrome f) at the step of heme attachment. The protein is Cytochrome c biogenesis protein CcsA of Arabis hirsuta (Hairy rock-cress).